Here is a 621-residue protein sequence, read N- to C-terminus: ATP-dependent lipid A-core flippase (621 aa).

5 consecutive transmembrane segments (helical) span residues 32-52 (IVAA…LAAF), 91-111 (VWGT…LVVI), 192-212 (IVLL…FPLL), 286-306 (SPFS…IALW), and 312-332 (YTTI…YAPI). Residues 33 to 344 (VAALIAIFGV…LANISIPMQT (312 aa)) form the ABC transmembrane type-1 domain. The ABC transporter domain maps to 378–611 (FRNVDVEYRS…NGYYTMLRNI (234 aa)). 410–417 (GRSGSGKS) is a binding site for ATP.

Belongs to the ABC transporter superfamily. Lipid exporter (TC 3.A.1.106) family. Homodimer.

The protein resides in the cell inner membrane. It catalyses the reaction ATP + H2O + lipid A-core oligosaccharideSide 1 = ADP + phosphate + lipid A-core oligosaccharideSide 2.. Functionally, involved in lipopolysaccharide (LPS) biosynthesis. Translocates lipid A-core from the inner to the outer leaflet of the inner membrane. Transmembrane domains (TMD) form a pore in the inner membrane and the ATP-binding domain (NBD) is responsible for energy generation. This chain is ATP-dependent lipid A-core flippase, found in Neisseria meningitidis serogroup B (strain ATCC BAA-335 / MC58).